Reading from the N-terminus, the 516-residue chain is GMP synthase [glutamine-hydrolyzing] (516 aa).

The 191-residue stretch at 8 to 198 (KILILDFGSQ…VVNICGCDTL (191 aa)) folds into the Glutamine amidotransferase type-1 domain. Cys84 (nucleophile) is an active-site residue. Active-site residues include His172 and Glu174. One can recognise a GMPS ATP-PPase domain in the interval 199-391 (WNIENIIEND…LGLPYNMLYR (193 aa)). 226–232 (SGGVDSS) contacts ATP.

As to quaternary structure, homodimer.

It carries out the reaction XMP + L-glutamine + ATP + H2O = GMP + L-glutamate + AMP + diphosphate + 2 H(+). It participates in purine metabolism; GMP biosynthesis; GMP from XMP (L-Gln route): step 1/1. Catalyzes the synthesis of GMP from XMP. The polypeptide is GMP synthase [glutamine-hydrolyzing] (Francisella tularensis subsp. holarctica (strain FTNF002-00 / FTA)).